A 377-amino-acid chain; its full sequence is Heat stress transcription factor B-2b (377 aa).

A disordered region spans residues 1–56 (MPGEQTGETPTVAGVGGGGAGCSAGNSGGSSGCGAGGGGGGSGGGGGGGGDSQRSI). Positions 14 to 51 (GVGGGGAGCSAGNSGGSSGCGAGGGGGGSGGGGGGGGD) are enriched in gly residues. The DNA-binding element occupies 57–151 (PTPFLTKTYQ…LLRDIQRRKI (95 aa)). Residues 220-265 (TTSCTTAPELVEENERLRKDNERLRKEMTKLKGLYANIYTLMANFT) are hydrophobic repeat HR-A/B. A Nuclear localization signal motif is present at residues 323–327 (KRARR). The tract at residues 326–377 (RREEELGAAEEEDDDRREAAAQEGEQSSDVKAEPMEENNSGNHNGSWLELGK) is disordered. The segment covering 331 to 340 (LGAAEEEDDD) has biased composition (acidic residues).

The protein belongs to the HSF family. Class B subfamily. In terms of assembly, homotrimer. Post-translationally, exhibits temperature-dependent phosphorylation.

It localises to the nucleus. In terms of biological role, transcriptional regulator that specifically binds DNA sequence 5'-AGAAnnTTCT-3' known as heat shock promoter elements (HSE). The protein is Heat stress transcription factor B-2b (HSFB2B) of Arabidopsis thaliana (Mouse-ear cress).